The chain runs to 278 residues: Large ribosomal subunit protein uL2 (278 aa).

The segment at 201–278 (HGNINDGKAG…IMRSRHQRKK (78 aa)) is disordered. Residues 210 to 221 (GRSRWRGKRPHV) show a composition bias toward basic residues.

This sequence belongs to the universal ribosomal protein uL2 family. As to quaternary structure, part of the 50S ribosomal subunit. Forms a bridge to the 30S subunit in the 70S ribosome.

One of the primary rRNA binding proteins. Required for association of the 30S and 50S subunits to form the 70S ribosome, for tRNA binding and peptide bond formation. It has been suggested to have peptidyltransferase activity; this is somewhat controversial. Makes several contacts with the 16S rRNA in the 70S ribosome. The sequence is that of Large ribosomal subunit protein uL2 from Rhizobium meliloti (strain 1021) (Ensifer meliloti).